The sequence spans 241 residues: uncharacterized protein (241 aa).

The segment at Lys-19 to Val-53 is disordered. A compositionally biased stretch (polar residues) spans Ser-30–Tyr-39.

This is an uncharacterized protein from Ostreid herpesvirus 1 (isolate France) (OsHV-1).